The chain runs to 591 residues: Heterogeneous nuclear ribonucleoprotein L-like (591 aa).

The tract at residues 1–120 (MSSSSSSSPK…STEGGGSHHK (120 aa)) is disordered. Positions 20–31 (FESQAKRLKTEE) are enriched in basic and acidic residues. Lys-28 is covalently cross-linked (Glycyl lysine isopeptide (Lys-Gly) (interchain with G-Cter in SUMO2)). Position 37 is a phosphoserine (Ser-37). Position 48 is a phosphothreonine (Thr-48). Gly residues predominate over residues 57–73 (SGGGDGGDGDGGSGGGG). A compositionally biased stretch (acidic residues) spans 74-91 (DGEEGEGGEEGDEGDGDE). Residues 92 to 105 (GGSGGDEGGSGGGP) are compositionally biased toward gly residues. Phosphoserine is present on residues Ser-107, Ser-117, and Ser-124. RRM domains are found at residues 125 to 199 (PVVH…YSTS), 215 to 293 (NKVL…YARP), and 384 to 458 (SVVM…VSKQ). A Glycyl lysine isopeptide (Lys-Gly) (interchain with G-Cter in SUMO2) cross-link involves residue Lys-540.

Interacts with HNRNPL.

RNA-binding protein that functions as a regulator of alternative splicing for multiple target mRNAs, including PTPRC/CD45 and STAT5A. Required for alternative splicing of PTPRC. The polypeptide is Heterogeneous nuclear ribonucleoprotein L-like (Hnrnpll) (Mus musculus (Mouse)).